The chain runs to 257 residues: tRNA (guanine-N(1)-)-methyltransferase (257 aa).

S-adenosyl-L-methionine contacts are provided by residues G117 and 137 to 142; that span reads LGDFVL.

It belongs to the RNA methyltransferase TrmD family. Homodimer.

It is found in the cytoplasm. The catalysed reaction is guanosine(37) in tRNA + S-adenosyl-L-methionine = N(1)-methylguanosine(37) in tRNA + S-adenosyl-L-homocysteine + H(+). In terms of biological role, specifically methylates guanosine-37 in various tRNAs. This is tRNA (guanine-N(1)-)-methyltransferase from Bordetella pertussis (strain Tohama I / ATCC BAA-589 / NCTC 13251).